Here is a 153-residue protein sequence, read N- to C-terminus: Interleukin-2 (153 aa).

Residues 1–20 (MYRMQLLSCIALSLALVTNS) form the signal peptide. Thr-23 is a glycosylation site (O-linked (GalNAc...) threonine). Cys-78 and Cys-125 are oxidised to a cystine.

The protein belongs to the IL-2 family.

It localises to the secreted. Functionally, cytokine produced by activated CD4-positive helper T-cells and to a lesser extend activated CD8-positive T-cells and natural killer (NK) cells that plays pivotal roles in the immune response and tolerance. Binds to a receptor complex composed of either the high-affinity trimeric IL-2R (IL2RA/CD25, IL2RB/CD122 and IL2RG/CD132) or the low-affinity dimeric IL-2R (IL2RB and IL2RG). Interaction with the receptor leads to oligomerization and conformation changes in the IL-2R subunits resulting in downstream signaling starting with phosphorylation of JAK1 and JAK3. In turn, JAK1 and JAK3 phosphorylate the receptor to form a docking site leading to the phosphorylation of several substrates including STAT5. This process leads to activation of several pathways including STAT, phosphoinositide-3-kinase/PI3K and mitogen-activated protein kinase/MAPK pathways. Functions as a T-cell growth factor and can increase NK-cell cytolytic activity as well. Promotes strong proliferation of activated B-cells and subsequently immunoglobulin production. Plays a pivotal role in regulating the adaptive immune system by controlling the survival and proliferation of regulatory T-cells, which are required for the maintenance of immune tolerance. Moreover, participates in the differentiation and homeostasis of effector T-cell subsets, including Th1, Th2, Th17 as well as memory CD8-positive T-cells. The polypeptide is Interleukin-2 (IL2) (Homo sapiens (Human)).